The primary structure comprises 35 residues: Conotoxin Cal6.1f (35 aa).

The propeptide occupies 1–8 (GLIRPSKR). Disulfide bonds link Cys9-Cys25, Cys16-Cys29, and Cys24-Cys34.

It belongs to the conotoxin O1 superfamily. Expressed by the venom duct.

It is found in the secreted. Its function is as follows. Probable neurotoxin with unknown target. Possibly targets ion channels. The sequence is that of Conotoxin Cal6.1f from Californiconus californicus (California cone).